Here is a 326-residue protein sequence, read N- to C-terminus: Meiotically up-regulated gene 113 protein (326 aa).

The protein localises to the cytoplasm. Has a role in meiosis. The chain is Meiotically up-regulated gene 113 protein (mug113) from Schizosaccharomyces pombe (strain 972 / ATCC 24843) (Fission yeast).